A 251-amino-acid chain; its full sequence is Probable transcriptional regulatory protein BLA_1344 (251 aa).

It belongs to the TACO1 family.

The protein localises to the cytoplasm. The protein is Probable transcriptional regulatory protein BLA_1344 of Bifidobacterium animalis subsp. lactis (strain AD011).